Here is a 1703-residue protein sequence, read N- to C-terminus: Ferlin 2 (1703 aa).

C2 domains are found at residues 18-141 (IRKL…KTWL) and 207-332 (KQPV…FRWF). Disordered regions lie at residues 913 to 937 (NQFN…FDDN), 970 to 1025 (NLDK…TSST), and 1194 to 1228 (KNKS…QKLG). The segment covering 916–928 (NDDDEGDNEDEQD) has biased composition (acidic residues). A compositionally biased stretch (polar residues) spans 979–991 (QPQSLKNLQNLDS). The span at 993–1009 (SKADQKSQFDLKSESKS) shows a compositional bias: basic and acidic residues. Over residues 1198–1209 (NRSSMSLSMRSS) the composition is skewed to low complexity. A C2 3 domain is found at 1466 to 1595 (VARIIPPSTI…LKKLKEGIVF (130 aa)). The interval 1628–1651 (AAESDPVGEGQNEPNKDPILEKPK) is disordered. Basic and acidic residues predominate over residues 1641-1651 (PNKDPILEKPK). The chain crosses the membrane as a helical span at residues 1681–1701 (FAGIFVSIVTMMILFVKPGIL).

Belongs to the ferlin family.

It is found in the membrane. Functionally, regulates mucocyst exocytosis. This Tetrahymena thermophila (strain SB210) protein is Ferlin 2.